Reading from the N-terminus, the 420-residue chain is Putative zinc metalloprotease Lmo1318 (420 aa).

H18 contacts Zn(2+). The active site involves E19. H22 serves as a coordination point for Zn(2+). The next 4 helical transmembrane spans lie at 172–194, 304–326, 347–369, and 393–412; these read TIFA…LAFV, NWIV…LDML, VLNW…LPAL, and GIIH…LVTW. A PDZ domain is found at 176 to 267; the sequence is GPLFNFILAI…DGKTQDIDVK (92 aa).

It belongs to the peptidase M50B family. Zn(2+) serves as cofactor.

The protein resides in the cell membrane. The protein is Putative zinc metalloprotease Lmo1318 of Listeria monocytogenes serovar 1/2a (strain ATCC BAA-679 / EGD-e).